The following is a 90-amino-acid chain: Large ribosomal subunit protein eL34 (90 aa).

The tract at residues 38-65 is disordered; sequence ARCGRPLGGVPRGRPPRVRRLSKTAKRP. The segment covering 51-62 has biased composition (basic residues); it reads RPPRVRRLSKTA.

The protein belongs to the eukaryotic ribosomal protein eL34 family.

This is Large ribosomal subunit protein eL34 (rpl34e) from Aeropyrum pernix (strain ATCC 700893 / DSM 11879 / JCM 9820 / NBRC 100138 / K1).